Here is a 147-residue protein sequence, read N- to C-terminus: NADPH-dependent 7-cyano-7-deazaguanine reductase (147 aa).

A disordered region spans residues 1-23 (MQTTHLGKNSPIPQSPEEASLDY). Residue Cys46 is the Thioimide intermediate of the active site. Asp53 functions as the Proton donor in the catalytic mechanism. Substrate-binding positions include 68–70 (VES) and 87–88 (HE).

Belongs to the GTP cyclohydrolase I family. QueF type 1 subfamily.

It is found in the cytoplasm. It carries out the reaction 7-aminomethyl-7-carbaguanine + 2 NADP(+) = 7-cyano-7-deazaguanine + 2 NADPH + 3 H(+). It functions in the pathway tRNA modification; tRNA-queuosine biosynthesis. Catalyzes the NADPH-dependent reduction of 7-cyano-7-deazaguanine (preQ0) to 7-aminomethyl-7-deazaguanine (preQ1). The polypeptide is NADPH-dependent 7-cyano-7-deazaguanine reductase (Zymomonas mobilis subsp. mobilis (strain ATCC 31821 / ZM4 / CP4)).